Here is a 316-residue protein sequence, read N- to C-terminus: Ubiquinol oxidase, mitochondrial (316 aa).

The transit peptide at 1–26 (MGVRAQPLLARSLITTTQPWILSARS) directs the protein to the mitochondrion. A helical transmembrane segment spans residues 124-144 (VHRAVVLETVAAVPGMVAGML). Residues Glu-131, Glu-170, and His-173 each coordinate Fe cation. Residues 189–209 (MLVALVQTLFFNVYFLAYMLF) traverse the membrane as a helical segment. The Fe cation site is built by Glu-221, Glu-272, and His-275.

It belongs to the alternative oxidase family. The cofactor is Fe cation.

The protein resides in the mitochondrion inner membrane. The catalysed reaction is 2 a ubiquinol + O2 = 2 a ubiquinone + 2 H2O. Its function is as follows. Alternative oxidase which function may be to reoxidize reducing equivalents produced by glycolysis such as ubiquinol. The sequence is that of Ubiquinol oxidase, mitochondrial (AOX) from Batrachochytrium dendrobatidis (strain JAM81 / FGSC 10211) (Frog chytrid fungus).